A 115-amino-acid polypeptide reads, in one-letter code: UPF0342 protein Bsph_0375 (115 aa).

It belongs to the UPF0342 family.

The sequence is that of UPF0342 protein Bsph_0375 from Lysinibacillus sphaericus (strain C3-41).